A 364-amino-acid polypeptide reads, in one-letter code: Peptide chain release factor 1 (364 aa).

The residue at position 238 (Q238) is an N5-methylglutamine.

This sequence belongs to the prokaryotic/mitochondrial release factor family. Methylated by PrmC. Methylation increases the termination efficiency of RF1.

It is found in the cytoplasm. Functionally, peptide chain release factor 1 directs the termination of translation in response to the peptide chain termination codons UAG and UAA. The sequence is that of Peptide chain release factor 1 from Psychrobacter sp. (strain PRwf-1).